A 60-amino-acid chain; its full sequence is Large ribosomal subunit protein bL32 (60 aa).

This sequence belongs to the bacterial ribosomal protein bL32 family.

The polypeptide is Large ribosomal subunit protein bL32 (Streptococcus pneumoniae serotype 19F (strain G54)).